The primary structure comprises 688 residues: ERI1 exoribonuclease 2 (688 aa).

Residues 37–226 enclose the Exonuclease domain; that stretch reads LIVVDFESTC…DDSRNTALLA (190 aa). 3 residues coordinate Mg(2+): Asp41, Glu43, and Asp156. The active-site Proton acceptor is Glu43. Residue Glu43 coordinates AMP. His213 (proton acceptor) is an active-site residue. His213 contacts AMP. A Mg(2+)-binding site is contributed by Asp218. Polar residues predominate over residues 337 to 360; sequence VDQLHSPTLNPPLTMQKPSKSDQL. Disordered regions lie at residues 337 to 367 and 523 to 546; these read VDQL…DSSK and DPLL…TKRQ. Residues Cys594, Cys596, Cys619, and Cys631 each contribute to the Zn(2+) site. The GRF-type zinc-finger motif lies at 594-640; that stretch reads CKCGRRSKRLIVSNNGPNHGKAFYCCPVGKYQQDRKCCGYFKWEQTL.

Belongs to the ERI2 family. Mg(2+) is required as a cofactor.

The protein is ERI1 exoribonuclease 2 (Eri2) of Mus musculus (Mouse).